The chain runs to 506 residues: Maturase K (506 aa).

The protein belongs to the intron maturase 2 family. MatK subfamily.

The protein localises to the plastid. It localises to the chloroplast. Its function is as follows. Usually encoded in the trnK tRNA gene intron. Probably assists in splicing its own and other chloroplast group II introns. The sequence is that of Maturase K from Uncarina grandidieri (Mouse trap tree).